The sequence spans 280 residues: Virginiamycin B lyase (280 aa).

Position 215 (His215) interacts with substrate. Mg(2+) is bound at residue Glu254. Catalysis depends on His256, which acts as the Proton acceptor. Glu271 serves as a coordination point for Mg(2+).

It belongs to the Vgb family. Monomer. The cofactor is Mg(2+).

Its function is as follows. Inactivates the type B streptogramin antibiotics by linearizing the lactone ring at the ester linkage, generating a free phenylglycine carboxylate and converting the threonyl moiety into 2-amino-butenoic acid. This Mycobacterium sp. (strain KMS) protein is Virginiamycin B lyase.